An 884-amino-acid chain; its full sequence is Kinesin-like protein KIN-7C (884 aa).

A Kinesin motor domain is found at R33–V355. Residue G119–T126 participates in ATP binding. Residues V364–D435 are a coiled coil. The disordered stretch occupies residues G434–G530. A compositionally biased stretch (low complexity) spans R449–V460. Residues S461–E483 are compositionally biased toward basic and acidic residues. Polar residues predominate over residues G498–S523.

The protein belongs to the TRAFAC class myosin-kinesin ATPase superfamily. Kinesin family. KIN-7 subfamily.

The chain is Kinesin-like protein KIN-7C from Oryza sativa subsp. japonica (Rice).